A 734-amino-acid chain; its full sequence is Polyphosphate kinase (734 aa).

Asparagine 67 provides a ligand contact to ATP. Mg(2+)-binding residues include arginine 392 and arginine 422. A PLD phosphodiesterase domain is found at 447–481; that stretch reads THLKTHSKIALVVKRINNELTSFVHLGTGNYNDKT. Histidine 452 serves as the catalytic Phosphohistidine intermediate. The ATP site is built by tyrosine 485, arginine 581, and histidine 609. Residues 705–734 are disordered; sequence KKQSVQPSGQPVHSRRGGSWMRKLKNTFKR.

It belongs to the polyphosphate kinase 1 (PPK1) family. Mg(2+) is required as a cofactor. In terms of processing, an intermediate of this reaction is the autophosphorylated ppk in which a phosphate is covalently linked to a histidine residue through a N-P bond.

It carries out the reaction [phosphate](n) + ATP = [phosphate](n+1) + ADP. In terms of biological role, catalyzes the reversible transfer of the terminal phosphate of ATP to form a long-chain polyphosphate (polyP). The protein is Polyphosphate kinase of Staphylococcus epidermidis (strain ATCC 12228 / FDA PCI 1200).